The sequence spans 213 residues: Protein ORF D (213 aa).

This Elephas maximus (Indian elephant) protein is Protein ORF D.